The sequence spans 182 residues: Ribosome-recycling factor (182 aa).

Residues 136-158 (IKKQEKEGDLSEDQSRDEQDQVQ) form a disordered region.

It belongs to the RRF family.

The protein localises to the cytoplasm. In terms of biological role, responsible for the release of ribosomes from messenger RNA at the termination of protein biosynthesis. May increase the efficiency of translation by recycling ribosomes from one round of translation to another. The chain is Ribosome-recycling factor from Synechococcus sp. (strain CC9311).